A 122-amino-acid chain; its full sequence is Alkene monooxygenase system, ferredoxin component (122 aa).

The Rieske domain occupies 16–111; the sequence is VDVCAVDDLW…LKVEGGRVLI (96 aa). Positions 55, 57, 75, and 78 each coordinate [2Fe-2S] cluster.

The protein belongs to the bacterial ring-hydroxylating dioxygenase ferredoxin component family. As to quaternary structure, homodimer. The alkene monooxygenase multicomponent enzyme system is composed of an electron transfer component and a monooxygenase component interacting with the effector protein XamoD. The electron transfer component is composed of a ferredoxin reductase (XamoF) and a ferredoxin (XamoC), and the monooxygenase component is formed by a heterohexamer (dimer of heterotrimers) of two alpha subunits (XamoA), two beta subunits (XamoE) and two gamma subunits (XamoB). [2Fe-2S] cluster serves as cofactor.

It localises to the cytoplasm. Its function is as follows. Ferredoxin component of the alkene monooxygenase multicomponent enzyme system which catalyzes the O2- and NADH-dependent epoxidation of short chain (C2 to C6) alkenes to their corresponding epoxides. Functions as an intermediate electron transfer protein. This Xanthobacter autotrophicus (strain ATCC BAA-1158 / Py2) protein is Alkene monooxygenase system, ferredoxin component.